Consider the following 373-residue polypeptide: Enoyl-[acyl-carrier-protein] reductase, mitochondrial (373 aa).

The N-terminal 53 residues, 1–53 (MWVCGALCRTRAPAQLGQRLLPESRRRRPASASFSASAEPSRVRALVYGHHGD), are a transit peptide targeting the mitochondrion. At Lys61 the chain carries N6-acetyllysine; alternate. An N6-succinyllysine; alternate modification is found at Lys61. The Proton donor role is filled by Tyr94. NADP(+) is bound by residues Asn167, 193-196 (NSGV), and 216-218 (RDT). N6-acetyllysine; alternate is present on residues Lys252 and Lys267. N6-succinyllysine; alternate is present on residues Lys252 and Lys267. Residues 285-288 (YGGM) and 310-312 (FWL) contribute to the NADP(+) site. The residue at position 316 (Lys316) is an N6-succinyllysine. Lys368 lines the NADP(+) pocket.

This sequence belongs to the zinc-containing alcohol dehydrogenase family. Quinone oxidoreductase subfamily. In terms of assembly, homodimer.

The protein resides in the mitochondrion. The enzyme catalyses a 2,3-saturated acyl-[ACP] + NADP(+) = a (2E)-enoyl-[ACP] + NADPH + H(+). It carries out the reaction (2E)-butenoyl-[ACP] + NADPH + H(+) = butanoyl-[ACP] + NADP(+). The catalysed reaction is (2E)-hexenoyl-[ACP] + NADPH + H(+) = hexanoyl-[ACP] + NADP(+). It catalyses the reaction (2E)-octenoyl-[ACP] + NADPH + H(+) = octanoyl-[ACP] + NADP(+). The enzyme catalyses (2E)-decenoyl-[ACP] + NADPH + H(+) = decanoyl-[ACP] + NADP(+). It carries out the reaction (2E)-dodecenoyl-[ACP] + NADPH + H(+) = dodecanoyl-[ACP] + NADP(+). The catalysed reaction is (2E)-tetradecenoyl-[ACP] + NADPH + H(+) = tetradecanoyl-[ACP] + NADP(+). It catalyses the reaction (2E)-hexadecenoyl-[ACP] + NADPH + H(+) = hexadecanoyl-[ACP] + NADP(+). Its function is as follows. Catalyzes the NADPH-dependent reduction of trans-2-enoyl thioesters in mitochondrial fatty acid synthesis (fatty acid synthesis type II). Fatty acid chain elongation in mitochondria uses acyl carrier protein (ACP) as an acyl group carrier, but the enzyme accepts both ACP and CoA thioesters as substrates in vitro. Displays a preference for medium-chain over short- and long-chain substrates. May provide the octanoyl chain used for lipoic acid biosynthesis, regulating protein lipoylation and mitochondrial respiratory activity particularly in Purkinje cells. Involved in iron homeostasis; affecting Fe-S cluster assembly and ceramide metabolism. Required for proper morphology and bioenergetic functions of mitochondria. Required for maintenance of neurons. The chain is Enoyl-[acyl-carrier-protein] reductase, mitochondrial (MECR) from Bos taurus (Bovine).